A 417-amino-acid polypeptide reads, in one-letter code: mRNA cap guanine-N(7) methyltransferase (417 aa).

The region spanning 129–412 is the mRNA cap 0 methyltransferase domain; the sequence is SPIIKLRNFN…LYTVFAFKKV (284 aa). MRNA is bound at residue 138–139; the sequence is NN. Residues lysine 142, glycine 160, aspartate 182, aspartate 211, glutamine 237, and tyrosine 242 each coordinate S-adenosyl-L-methionine.

It belongs to the class I-like SAM-binding methyltransferase superfamily. mRNA cap 0 methyltransferase family.

Its subcellular location is the nucleus. It carries out the reaction a 5'-end (5'-triphosphoguanosine)-ribonucleoside in mRNA + S-adenosyl-L-methionine = a 5'-end (N(7)-methyl 5'-triphosphoguanosine)-ribonucleoside in mRNA + S-adenosyl-L-homocysteine. Responsible for methylating the 5'-cap structure of mRNAs. The sequence is that of mRNA cap guanine-N(7) methyltransferase (ABD1) from Candida glabrata (strain ATCC 2001 / BCRC 20586 / JCM 3761 / NBRC 0622 / NRRL Y-65 / CBS 138) (Yeast).